Reading from the N-terminus, the 123-residue chain is Large ribosomal subunit protein uL14 (123 aa).

The protein belongs to the universal ribosomal protein uL14 family. Part of the 50S ribosomal subunit. Forms a cluster with proteins L3 and L19. In the 70S ribosome, L14 and L19 interact and together make contacts with the 16S rRNA in bridges B5 and B8.

Functionally, binds to 23S rRNA. Forms part of two intersubunit bridges in the 70S ribosome. The protein is Large ribosomal subunit protein uL14 of Photobacterium profundum (strain SS9).